Reading from the N-terminus, the 967-residue chain is Aminopeptidase N (967 aa).

The Cytoplasmic portion of the chain corresponds to 2–8; that stretch reads AKGFYIS. The helical; Signal-anchor for type II membrane protein transmembrane segment at 9 to 32 threads the bilayer; that stretch reads KSLGILGILLGVAAVCTIIALSVV. A cytosolic Ser/Thr-rich junction region spans residues 33 to 68; it reads YSQEKNKNANSSPVASTTPSASATTNPASATTLDQS. Topologically, residues 33–967 are extracellular; that stretch reads YSQEKNKNAN…VLQWFTENSK (935 aa). Positions 40-62 are disordered; sequence NANSSPVASTTPSASATTNPASA. Residues 41 to 62 show a composition bias toward low complexity; sequence ANSSPVASTTPSASATTNPASA. The interval 69–967 is metalloprotease; that stretch reads KAWNRYRLPN…VLQWFTENSK (899 aa). N-linked (GlcNAc...) asparagine glycosylation is present at N128. Y176 is subject to Sulfotyrosine. 2 N-linked (GlcNAc...) asparagine glycosylation sites follow: N234 and N265. A necessary and sufficient to mediate interaction with HCoV-229E region spans residues 288 to 295; the sequence is DYVEKQAS. N-linked (GlcNAc...) asparagine glycosylation occurs at N319. A substrate-binding site is contributed by 352-356; that stretch reads GAMEN. H388 contributes to the Zn(2+) binding site. E389 serves as the catalytic Proton acceptor. 2 residues coordinate Zn(2+): H392 and E411. A sulfotyrosine mark is found at Y419 and Y424. N-linked (GlcNAc...) asparagine glycans are attached at residues N527, N573, N625, N681, and N735. Cystine bridges form between C761/C768 and C798/C834. The N-linked (GlcNAc...) asparagine glycan is linked to N818. Y913 is modified (sulfotyrosine).

It belongs to the peptidase M1 family. Homodimer. Interacts with SLC6A19. As to quaternary structure, (Microbial infection) Interacts with the S1 domain of human coronavirus 229E/HCoV-229E spike protein. Zn(2+) is required as a cofactor. Sulfated. In terms of processing, N- and O-glycosylated. Post-translationally, may undergo proteolysis and give rise to a soluble form. As to expression, expressed in epithelial cells of the kidney, intestine, and respiratory tract; granulocytes, monocytes, fibroblasts, endothelial cells, cerebral pericytes at the blood-brain barrier, synaptic membranes of cells in the CNS. Also expressed in endometrial stromal cells, but not in the endometrial glandular cells. Found in the vasculature of tissues that undergo angiogenesis and in malignant gliomas and lymph node metastases from multiple tumor types but not in blood vessels of normal tissues. A soluble form has been found in plasma. It is found to be elevated in plasma and effusions of cancer patients.

The protein localises to the cell membrane. The enzyme catalyses Release of an N-terminal amino acid, Xaa-|-Yaa- from a peptide, amide or arylamide. Xaa is preferably Ala, but may be most amino acids including Pro (slow action). When a terminal hydrophobic residue is followed by a prolyl residue, the two may be released as an intact Xaa-Pro dipeptide.. Broad specificity aminopeptidase which plays a role in the final digestion of peptides generated from hydrolysis of proteins by gastric and pancreatic proteases. Also involved in the processing of various peptides including peptide hormones, such as angiotensin III and IV, neuropeptides, and chemokines. May also be involved the cleavage of peptides bound to major histocompatibility complex class II molecules of antigen presenting cells. May have a role in angiogenesis and promote cholesterol crystallization. May have a role in amino acid transport by acting as binding partner of amino acid transporter SLC6A19 and regulating its activity. Its function is as follows. (Microbial infection) Acts as a receptor for human coronavirus 229E/HCoV-229E. In case of human coronavirus 229E (HCoV-229E) infection, serves as receptor for HCoV-229E spike glycoprotein. In terms of biological role, (Microbial infection) Mediates as well Human cytomegalovirus (HCMV) infection. This Homo sapiens (Human) protein is Aminopeptidase N (ANPEP).